A 341-amino-acid polypeptide reads, in one-letter code: Anthranilate phosphoribosyltransferase (341 aa).

5-phospho-alpha-D-ribose 1-diphosphate contacts are provided by residues Gly79, 82-83 (GD), Thr87, 89-92 (NIST), 107-115 (KHGNRAVSS), and Ser119. Anthranilate is bound at residue Gly79. Position 91 (Ser91) interacts with Mg(2+). Position 110 (Asn110) interacts with anthranilate. Arg165 lines the anthranilate pocket. Mg(2+)-binding residues include Asp224 and Glu225.

This sequence belongs to the anthranilate phosphoribosyltransferase family. In terms of assembly, homodimer. Requires Mg(2+) as cofactor.

The enzyme catalyses N-(5-phospho-beta-D-ribosyl)anthranilate + diphosphate = 5-phospho-alpha-D-ribose 1-diphosphate + anthranilate. It participates in amino-acid biosynthesis; L-tryptophan biosynthesis; L-tryptophan from chorismate: step 2/5. In terms of biological role, catalyzes the transfer of the phosphoribosyl group of 5-phosphorylribose-1-pyrophosphate (PRPP) to anthranilate to yield N-(5'-phosphoribosyl)-anthranilate (PRA). This chain is Anthranilate phosphoribosyltransferase, found in Bacillus thuringiensis subsp. konkukian (strain 97-27).